A 97-amino-acid polypeptide reads, in one-letter code: YcgL domain-containing protein PSPPH_1548 (97 aa).

A YcgL domain is found at 3-87 (RICSIYRSPK…AEDDYIEHLP (85 aa)).

This is YcgL domain-containing protein PSPPH_1548 from Pseudomonas savastanoi pv. phaseolicola (strain 1448A / Race 6) (Pseudomonas syringae pv. phaseolicola (strain 1448A / Race 6)).